The sequence spans 202 residues: Rho GDP-dissociation inhibitor (202 aa).

Ala-2 carries the post-translational modification N-acetylalanine. Position 27 is a phosphothreonine (Thr-27). The residue at position 40 (Ser-40) is a Phosphoserine.

This sequence belongs to the Rho GDI family.

It localises to the cytoplasm. In terms of biological role, regulates the GDP/GTP exchange reaction of the Rho proteins by inhibiting the dissociation of GDP from them, and the subsequent binding of GTP to them. This chain is Rho GDP-dissociation inhibitor (RDI1), found in Saccharomyces cerevisiae (strain ATCC 204508 / S288c) (Baker's yeast).